A 316-amino-acid chain; its full sequence is Glutathione synthetase (316 aa).

The region spanning 125 to 310 (KLFTAWFSDL…ITGMLMDAIE (186 aa)) is the ATP-grasp domain. 151–207 (WEKHSDIILKPLDGMGGASIFRVKEGDPNLGVIAETLTEHGTRYCMAQNYLPAIKDG) lines the ATP pocket. Positions 281 and 283 each coordinate Mg(2+).

It belongs to the prokaryotic GSH synthase family. Requires Mg(2+) as cofactor. Mn(2+) serves as cofactor.

The catalysed reaction is gamma-L-glutamyl-L-cysteine + glycine + ATP = glutathione + ADP + phosphate + H(+). It participates in sulfur metabolism; glutathione biosynthesis; glutathione from L-cysteine and L-glutamate: step 2/2. This chain is Glutathione synthetase, found in Escherichia coli O6:H1 (strain CFT073 / ATCC 700928 / UPEC).